The primary structure comprises 348 residues: Protein RecA (348 aa).

66–73 serves as a coordination point for ATP; sequence GPESSGKT.

The protein belongs to the RecA family.

The protein resides in the cytoplasm. Can catalyze the hydrolysis of ATP in the presence of single-stranded DNA, the ATP-dependent uptake of single-stranded DNA by duplex DNA, and the ATP-dependent hybridization of homologous single-stranded DNAs. It interacts with LexA causing its activation and leading to its autocatalytic cleavage. The polypeptide is Protein RecA (Burkholderia lata (strain ATCC 17760 / DSM 23089 / LMG 22485 / NCIMB 9086 / R18194 / 383)).